We begin with the raw amino-acid sequence, 167 residues long: Phosphopantetheine adenylyltransferase (167 aa).

Thr-9 is a binding site for substrate. Residues 9–10 (TF) and His-17 each bind ATP. Residues Lys-41, Leu-73, and Arg-87 each coordinate substrate. ATP-binding positions include 88–90 (GLR), Glu-98, and 123–129 (YQFISGT).

It belongs to the bacterial CoaD family. As to quaternary structure, homohexamer. Mg(2+) is required as a cofactor.

The protein resides in the cytoplasm. It catalyses the reaction (R)-4'-phosphopantetheine + ATP + H(+) = 3'-dephospho-CoA + diphosphate. The protein operates within cofactor biosynthesis; coenzyme A biosynthesis; CoA from (R)-pantothenate: step 4/5. In terms of biological role, reversibly transfers an adenylyl group from ATP to 4'-phosphopantetheine, yielding dephospho-CoA (dPCoA) and pyrophosphate. This chain is Phosphopantetheine adenylyltransferase, found in Bordetella avium (strain 197N).